Consider the following 100-residue polypeptide: Small ribosomal subunit protein uS14c (100 aa).

Belongs to the universal ribosomal protein uS14 family. As to quaternary structure, part of the 30S ribosomal subunit.

It is found in the plastid. The protein resides in the chloroplast. Binds 16S rRNA, required for the assembly of 30S particles. The polypeptide is Small ribosomal subunit protein uS14c (Phaeodactylum tricornutum (strain CCAP 1055/1)).